The sequence spans 201 residues: METRALSVNLREVKKNGAAKLRQQGMVPAVVYHKGEETVAISVDEIALDKLVHSAESHLIDLQYPDGKSVRAFIKDLQFDPVTDRVIHADFKRFTADEVVEMEVPIHVEGEAVGVKIGGGKLQINMHTLTLKGKPANMPEHFTIDVSALETGHSLHISDLQATVPAGTIEIIGDADAAIVSVAAPRKEAEAEAEEETTEEA.

It belongs to the bacterial ribosomal protein bL25 family. CTC subfamily. In terms of assembly, part of the 50S ribosomal subunit; part of the 5S rRNA/L5/L18/L25 subcomplex. Contacts the 5S rRNA. Binds to the 5S rRNA independently of L5 and L18.

Functionally, this is one of the proteins that binds to the 5S RNA in the ribosome where it forms part of the central protuberance. The chain is Large ribosomal subunit protein bL25 from Chlorobaculum parvum (strain DSM 263 / NCIMB 8327) (Chlorobium vibrioforme subsp. thiosulfatophilum).